We begin with the raw amino-acid sequence, 333 residues long: Phosphoenolpyruvate transferase (333 aa).

D65 lines the 7,8-didemethyl-8-hydroxy-5-deazariboflavin pocket.

It belongs to the CofD family. Homodimer. It depends on Mg(2+) as a cofactor.

The catalysed reaction is enolpyruvoyl-2-diphospho-5'-guanosine + 7,8-didemethyl-8-hydroxy-5-deazariboflavin = dehydro coenzyme F420-0 + GMP + H(+). It participates in cofactor biosynthesis; coenzyme F420 biosynthesis. Catalyzes the transfer of the phosphoenolpyruvate moiety from enoylpyruvoyl-2-diphospho-5'-guanosine (EPPG) to 7,8-didemethyl-8-hydroxy-5-deazariboflavin (FO) with the formation of dehydro coenzyme F420-0 and GMP. The polypeptide is Phosphoenolpyruvate transferase (Mycobacterium leprae (strain TN)).